Here is a 72-residue protein sequence, read N- to C-terminus: Toxin Cll8 (72 aa).

The first 4 residues, Thr1–Ala4, serve as a signal peptide directing secretion. Residues Lys5–Gly70 form the LCN-type CS-alpha/beta domain. 4 disulfides stabilise this stretch: Cys16/Cys69, Cys20/Cys45, Cys29/Cys50, and Cys33/Cys52. Cysteine amide is present on Cys69.

This sequence belongs to the long (4 C-C) scorpion toxin superfamily. Sodium channel inhibitor family. Beta subfamily. Expressed by the venom gland.

It is found in the secreted. In terms of biological role, beta toxins bind voltage-independently at site-4 of sodium channels (Nav) and shift the voltage of activation toward more negative potentials thereby affecting sodium channel activation and promoting spontaneous and repetitive firing. The protein is Toxin Cll8 of Centruroides limpidus (Mexican scorpion).